A 326-amino-acid chain; its full sequence is GTPase IMAP family member 5 (326 aa).

The Cytoplasmic portion of the chain corresponds to 1–297 (MEDHGFEELS…MLCRVTSCLD (297 aa)). Positions 42–245 (SGLLRILLVG…HSNDLFVYTQ (204 aa)) constitute an AIG1-type G domain. Residues 51-59 (GKSGCGKSA), S72, 169-171 (HKE), and N206 contribute to the GTP site. The chain crosses the membrane as a helical; Anchor for type IV membrane protein span at residues 298 to 318 (WHIAVSVLLIVLGLTLLITLI). At 319–326 (NMYIGRWK) the chain is on the lumenal side.

This sequence belongs to the TRAFAC class TrmE-Era-EngA-EngB-Septin-like GTPase superfamily. AIG1/Toc34/Toc159-like paraseptin GTPase family. IAN subfamily. As to quaternary structure, interacts with BAD, BAK1, BAX, BCL2, BCL2L1/Bcl-xL and BCL2L11/BimEL. The interaction with BAX is increased, when cells initiate apoptosis upon IL2 withdrawal. Forms a complex with BCL2L1 or MCL1 and HSPA8/HSC70; the interaction between HSPA8 and BCL2L1 or MCL1 is impaired in the absence of GIMAP5. May interact (via N-terminus) with microtubules. As to expression, primarily expressed in spleen, heart, lung and intestine and, at lower levels, in kidney, stomach and muscle. Expressed in thymus and lymph nodes (at protein level). In the spleen, expressed in periarteriolar lymphatic sheets. Isoform 2: Expressed at higher levels in T lymphocytes compared to isoform 1.

The protein localises to the lysosome membrane. It is found in the endosome. It localises to the multivesicular body membrane. Its subcellular location is the endosome membrane. Its function is as follows. Required for mitochondrial integrity and T-cell survival. May contribute to T-cell quiescence. Plays a role in T lymphocyte development and the optimal generation of CD4/CD8 double-positive thymocytes. Inhibitor of GSK3A, possibly by sequestering GSK3A in cytoplasmic vesicles and impairing its translocation to the nucleus. Consequently, impairs GSK3A-dependent transcriptional program and regulation of the DNA damage response occurring during T cells proliferation. Required for the survival of peripheral T cells, natural killer (NK) and NK T-cell development and the maintenance of normal liver function. Promotes the survival of quiescent T-cells. May regulate Ca(2+) homeostasis by modulating lysosomal Ca(2+) stores, preventing its accumulation in the absence of T cell activation. May play a role in mitochondrial DNA segregation in hematopoietic tissues. Is a regulator of liver endothelial cell homeostasis. This is GTPase IMAP family member 5 (Gimap5) from Rattus norvegicus (Rat).